The chain runs to 373 residues: Histidinol-phosphate aminotransferase (373 aa).

K233 carries the N6-(pyridoxal phosphate)lysine modification.

This sequence belongs to the class-II pyridoxal-phosphate-dependent aminotransferase family. Histidinol-phosphate aminotransferase subfamily. As to quaternary structure, homodimer. Pyridoxal 5'-phosphate serves as cofactor.

It carries out the reaction L-histidinol phosphate + 2-oxoglutarate = 3-(imidazol-4-yl)-2-oxopropyl phosphate + L-glutamate. The protein operates within amino-acid biosynthesis; L-histidine biosynthesis; L-histidine from 5-phospho-alpha-D-ribose 1-diphosphate: step 7/9. This Nitratidesulfovibrio vulgaris (strain DP4) (Desulfovibrio vulgaris) protein is Histidinol-phosphate aminotransferase.